The sequence spans 475 residues: Glycogen synthase (475 aa).

Residue K15 coordinates ADP-alpha-D-glucose.

It belongs to the glycosyltransferase 1 family. Bacterial/plant glycogen synthase subfamily.

The enzyme catalyses [(1-&gt;4)-alpha-D-glucosyl](n) + ADP-alpha-D-glucose = [(1-&gt;4)-alpha-D-glucosyl](n+1) + ADP + H(+). Its pathway is glycan biosynthesis; glycogen biosynthesis. Its function is as follows. Synthesizes alpha-1,4-glucan chains using ADP-glucose. The protein is Glycogen synthase of Chlamydia abortus (strain DSM 27085 / S26/3) (Chlamydophila abortus).